The following is a 420-amino-acid chain: Protein BDLF2 (420 aa).

Disordered stretches follow at residues 1–21 (MVDEQVAVEHGTVSHTISREE) and 64–129 (AAAV…GGQR). Topologically, residues 1 to 184 (MVDEQVAVEH…AETLAEPPRC (184 aa)) are intravirion. Low complexity predominate over residues 90–108 (TKTNTQDQNQNQTTRTRTN). A helical; Signal-anchor for type II membrane protein transmembrane segment spans residues 185-205 (FMLSFVFIYYCCYLAFLALLA). At 206 to 420 (FGFNPLFLPS…LEEVMYVMVQ (215 aa)) the chain is on the virion surface side. N-linked (GlcNAc...) asparagine; by host glycosylation is found at N258, N264, N300, N304, N371, and N384.

It belongs to the herpesviridae BDLF2 family. Interacts with BMRF2.

It localises to the virion membrane. In terms of biological role, rearranges cellular actin to increase intercellular contacts and thereby promote virus cell-to-cell spreading. Induce the outgrowth of long, branched plasma membrane fronds to create intercellular network for virion traffic. The fronds are actin based and RhoA-dependent. In Homo sapiens (Human), this protein is Protein BDLF2.